Here is a 150-residue protein sequence, read N- to C-terminus: Late promoter-activating protein (150 aa).

In terms of biological role, trans-activating factor involved in the late regulation of the P1 lytic growth cycle. May be the transcriptional activator of all late P1 functions. The chain is Late promoter-activating protein (lpa) from Escherichia phage P1 (Bacteriophage P1).